The sequence spans 450 residues: mRNA cleavage and polyadenylation factor CLP1 (450 aa).

Residues E29, K67, and 137–142 each bind ATP; that span reads NSGKTS.

Belongs to the Clp1 family. Clp1 subfamily. As to quaternary structure, component of a pre-mRNA cleavage factor complex. Interacts directly with PCF11.

The protein resides in the nucleus. In terms of biological role, required for endonucleolytic cleavage during polyadenylation-dependent pre-mRNA 3'-end formation. The chain is mRNA cleavage and polyadenylation factor CLP1 from Yarrowia lipolytica (strain CLIB 122 / E 150) (Yeast).